Consider the following 66-residue polypeptide: Phylloseptin-H7 (66 aa).

Positions 1 to 22 (MAFLKKSLFLVLFLGLVSLSIC) are cleaved as a signal peptide. Positions 23-44 (EEEKRETEEEENDQEEDDKSEE) are excised as a propeptide. The segment at 25-44 (EKRETEEEENDQEEDDKSEE) is disordered. Over residues 30 to 41 (EEEENDQEEDDK) the composition is skewed to acidic residues. The residue at position 65 (Leu65) is a Leucine amide.

As to expression, expressed by the skin glands.

The protein localises to the secreted. Has antimicrobial activity. This chain is Phylloseptin-H7, found in Pithecopus hypochondrialis (Orange-legged leaf frog).